A 960-amino-acid chain; its full sequence is RasGEF domain-containing serine/threonine-protein kinase X (960 aa).

The Protein kinase domain occupies 21 to 274 (LEFNEKIGKG…FDEILSQLKV (254 aa)). ATP is bound by residues 27 to 35 (IGKGSFGSV) and Lys-48. Asp-140 serves as the catalytic Proton acceptor. The segment covering 314-368 (NISFSPNNSNNNNNNNNNISNISPDITTGIQQINLSSSGGSNNSSPSTPPQGSQL) has biased composition (low complexity). 2 disordered regions span residues 314 to 372 (NISF…VSLA) and 393 to 413 (GQLSTTPPPTSPIQSRPHKPS). An N-terminal Ras-GEF domain is found at 437 to 565 (PCYAALTSHI…LGTTISNNEL (129 aa)). A disordered region spans residues 596 to 651 (NNNNNNNNNPVNNINNINNNNSVNSSSSNNNNNNNNNNSNNNNNNNNNNNNNNNNN). The 246-residue stretch at 712–957 (HSTELARQIT…KNNSLKCEPP (246 aa)) folds into the Ras-GEF domain.

This sequence belongs to the protein kinase superfamily. TKL Ser/Thr protein kinase family.

The enzyme catalyses L-seryl-[protein] + ATP = O-phospho-L-seryl-[protein] + ADP + H(+). It catalyses the reaction L-threonyl-[protein] + ATP = O-phospho-L-threonyl-[protein] + ADP + H(+). Its function is as follows. Promotes the exchange of Ras-bound GDP by GTP. The chain is RasGEF domain-containing serine/threonine-protein kinase X (gefX) from Dictyostelium discoideum (Social amoeba).